Here is a 299-residue protein sequence, read N- to C-terminus: MQFKRAWKQVDGVLLLDKPLGMTSNDALQKARRLFSAAKGGHTGTLDPLATGLLPLCFGEATKFSADLLDADKTYEAVLKLGVTTDSGDAEGQVTSTAMVDIQKEQVSEVLPRFVGDIQQIPPMHSALKRNGRPLYELARQGIEVEREPRAVTIFAIDCLDFSGDLLTLRVACSKGTYIRVLAADIGKALGCGAHLAALRRIVVGDIRLGNSVTLAELETLDEAGRMERLLPVDALLQSLPIVGVEGPEAERFRHGNPVSLPAGLAGKARVYAEGRLIGVGEPGHGGLLWPKRLVQLAD.

The active-site Nucleophile is Asp47.

Belongs to the pseudouridine synthase TruB family. Type 1 subfamily.

The catalysed reaction is uridine(55) in tRNA = pseudouridine(55) in tRNA. Functionally, responsible for synthesis of pseudouridine from uracil-55 in the psi GC loop of transfer RNAs. This chain is tRNA pseudouridine synthase B, found in Dechloromonas aromatica (strain RCB).